A 665-amino-acid polypeptide reads, in one-letter code: Filensin (665 aa).

The tract at residues 1 to 40 is head; sequence MYRRSYVFQTRKEQYEHADEASRAAEPERPADEGWAGATS. Position 5 is a phosphoserine (serine 5). The IF rod domain maps to 40 to 320; the sequence is SLAALQGLGE…RIIEIEGNRL (281 aa). The coil 1A stretch occupies residues 41–75; sequence LAALQGLGERVAAHVQRARALEQRHAGLRRQLDAF. N-acetylalanine is present on alanine 42. The linker 1 stretch occupies residues 76 to 84; the sequence is QRLGELAGP. Residues 85-184 form a coil 1B region; that stretch reads EDALARQVES…RHKKNLLEVQ (100 aa). A linker 12 region spans residues 185–201; that stretch reads TYISILQQIIHTTPPAS. A coil 2 region spans residues 202–320; sequence IVTSGMREEK…RIIEIEGNRL (119 aa). The segment at 321–665 is tail; it reads TSAFIETPIP…DKKKSGEKSS (345 aa). Phosphoserine occurs at positions 341 and 420. Disordered stretches follow at residues 410-439 and 506-614; these read SKFE…QISK and YDGQ…KGPP. Glycine 434 carries the N-myristoyl glycine lipid modification. A Phosphoserine modification is found at serine 513. The segment covering 556 to 571 has biased composition (basic and acidic residues); the sequence is PEEKREGEERDEESRR. Serine 665 is subject to Phosphoserine.

It belongs to the intermediate filament family. Part of a complex required for lens intermediate filament formation composed of BFSP1, BFSP2 and CRYAA. Identified in a complex that contains VIM, EZR, AHNAK, BFSP1, BFSP2, ANK2, PLEC, PRX and spectrin. Found in a complex composed of PPL (via C-terminal linker domain), BFSP1 and BFSP2 in the retinal lens. Within the complex interacts with BFSP2. Interacts (via C-terminus) with MIP (via C-terminus) in aged lens fiber cells. Post-translationally, proteolytically cleaved during lens cell fiber differentiation with increased fragmentation as fiber cell age increases. Myristoylated at Gly-434 following proteolytic cleavage at Asp-433. In terms of processing, acetylated at Ala-42 following proteolytic cleavage at Leu-41. As to expression, expressed in the cortex and nucleus of the retina lens (at protein level).

It is found in the cell membrane. The protein localises to the cytoplasm. Its subcellular location is the cytoskeleton. It localises to the cell cortex. Its function is as follows. Required for the correct formation of lens intermediate filaments as part of a complex composed of BFSP1, BFSP2 and CRYAA. Involved in altering the calcium regulation of MIP water permeability. The protein is Filensin (BFSP1) of Homo sapiens (Human).